The following is a 144-amino-acid chain: uncharacterized protein (144 aa).

Residues 23 to 82 (EELYKKLENNLRKIETSYLDSKHCQDFKRKIEYYKIVPLISETKEIIKVLIQKIETLEIK) adopt a coiled-coil conformation.

This is an uncharacterized protein from Acanthamoeba polyphaga mimivirus (APMV).